The primary structure comprises 271 residues: Formamidopyrimidine-DNA glycosylase (271 aa).

Catalysis depends on P2, which acts as the Schiff-base intermediate with DNA. Residue E3 is the Proton donor of the active site. K58 (proton donor; for beta-elimination activity) is an active-site residue. 3 residues coordinate DNA: H90, R108, and R151. The segment at 236–271 adopts an FPG-type; degenerate zinc-finger fold; the sequence is QVYGRDGQPCHRDDGGTIRRFAQGGRSTWYCPRCQR. R261 functions as the Proton donor; for delta-elimination activity in the catalytic mechanism.

It belongs to the FPG family. In terms of assembly, monomer. The cofactor is Zn(2+).

The enzyme catalyses Hydrolysis of DNA containing ring-opened 7-methylguanine residues, releasing 2,6-diamino-4-hydroxy-5-(N-methyl)formamidopyrimidine.. It catalyses the reaction 2'-deoxyribonucleotide-(2'-deoxyribose 5'-phosphate)-2'-deoxyribonucleotide-DNA = a 3'-end 2'-deoxyribonucleotide-(2,3-dehydro-2,3-deoxyribose 5'-phosphate)-DNA + a 5'-end 5'-phospho-2'-deoxyribonucleoside-DNA + H(+). Involved in base excision repair of DNA damaged by oxidation or by mutagenic agents. Acts as a DNA glycosylase that recognizes and removes damaged bases. Has a preference for oxidized purines, such as 7,8-dihydro-8-oxoguanine (8-oxoG). Has AP (apurinic/apyrimidinic) lyase activity and introduces nicks in the DNA strand. Cleaves the DNA backbone by beta-delta elimination to generate a single-strand break at the site of the removed base with both 3'- and 5'-phosphates. The protein is Formamidopyrimidine-DNA glycosylase of Erythrobacter litoralis (strain HTCC2594).